The primary structure comprises 367 residues: UDP-N-acetylglucosamine--N-acetylmuramyl-(pentapeptide) pyrophosphoryl-undecaprenol N-acetylglucosamine transferase (367 aa).

UDP-N-acetyl-alpha-D-glucosamine is bound by residues T15–G17, N127, R163, S191, I249, and Q294.

This sequence belongs to the glycosyltransferase 28 family. MurG subfamily.

It localises to the cell inner membrane. The enzyme catalyses di-trans,octa-cis-undecaprenyl diphospho-N-acetyl-alpha-D-muramoyl-L-alanyl-D-glutamyl-meso-2,6-diaminopimeloyl-D-alanyl-D-alanine + UDP-N-acetyl-alpha-D-glucosamine = di-trans,octa-cis-undecaprenyl diphospho-[N-acetyl-alpha-D-glucosaminyl-(1-&gt;4)]-N-acetyl-alpha-D-muramoyl-L-alanyl-D-glutamyl-meso-2,6-diaminopimeloyl-D-alanyl-D-alanine + UDP + H(+). It functions in the pathway cell wall biogenesis; peptidoglycan biosynthesis. Cell wall formation. Catalyzes the transfer of a GlcNAc subunit on undecaprenyl-pyrophosphoryl-MurNAc-pentapeptide (lipid intermediate I) to form undecaprenyl-pyrophosphoryl-MurNAc-(pentapeptide)GlcNAc (lipid intermediate II). The protein is UDP-N-acetylglucosamine--N-acetylmuramyl-(pentapeptide) pyrophosphoryl-undecaprenol N-acetylglucosamine transferase of Burkholderia thailandensis (strain ATCC 700388 / DSM 13276 / CCUG 48851 / CIP 106301 / E264).